The following is a 592-amino-acid chain: NADH-quinone oxidoreductase subunit C/D (592 aa).

An NADH dehydrogenase I subunit C region spans residues 1 to 183 (MLTEFNSIPA…GPYILTEEKE (183 aa)). The interval 207–592 (DFMFLNLGPN…IDFVMADVDR (386 aa)) is NADH dehydrogenase I subunit D.

In the N-terminal section; belongs to the complex I 30 kDa subunit family. This sequence in the C-terminal section; belongs to the complex I 49 kDa subunit family. NDH-1 is composed of 13 different subunits. Subunits NuoB, CD, E, F, and G constitute the peripheral sector of the complex.

The protein localises to the cell inner membrane. The catalysed reaction is a quinone + NADH + 5 H(+)(in) = a quinol + NAD(+) + 4 H(+)(out). In terms of biological role, NDH-1 shuttles electrons from NADH, via FMN and iron-sulfur (Fe-S) centers, to quinones in the respiratory chain. The immediate electron acceptor for the enzyme in this species is believed to be ubiquinone. Couples the redox reaction to proton translocation (for every two electrons transferred, four hydrogen ions are translocated across the cytoplasmic membrane), and thus conserves the redox energy in a proton gradient. The chain is NADH-quinone oxidoreductase subunit C/D from Acidiphilium cryptum (strain JF-5).